A 222-amino-acid chain; its full sequence is Holliday junction branch migration complex subunit RuvA (222 aa).

The segment at 1-67 (MISWLNGLKI…EDGSQLIGFL (67 aa)) is domain I. A domain II region spans residues 68–146 (NKLERDLFRK…DLIGSSLKKT (79 aa)). A flexible linker region spans residues 147–155 (NNHLELEYE). Residues 155–222 (ETNVADEVRS…TLIRINTESG (68 aa)) are domain III.

The protein belongs to the RuvA family. In terms of assembly, homotetramer. Forms an RuvA(8)-RuvB(12)-Holliday junction (HJ) complex. HJ DNA is sandwiched between 2 RuvA tetramers; dsDNA enters through RuvA and exits via RuvB. An RuvB hexamer assembles on each DNA strand where it exits the tetramer. Each RuvB hexamer is contacted by two RuvA subunits (via domain III) on 2 adjacent RuvB subunits; this complex drives branch migration. In the full resolvosome a probable DNA-RuvA(4)-RuvB(12)-RuvC(2) complex forms which resolves the HJ.

The protein localises to the cytoplasm. The RuvA-RuvB-RuvC complex processes Holliday junction (HJ) DNA during genetic recombination and DNA repair, while the RuvA-RuvB complex plays an important role in the rescue of blocked DNA replication forks via replication fork reversal (RFR). RuvA specifically binds to HJ cruciform DNA, conferring on it an open structure. The RuvB hexamer acts as an ATP-dependent pump, pulling dsDNA into and through the RuvAB complex. HJ branch migration allows RuvC to scan DNA until it finds its consensus sequence, where it cleaves and resolves the cruciform DNA. The chain is Holliday junction branch migration complex subunit RuvA from Prochlorococcus marinus (strain SARG / CCMP1375 / SS120).